We begin with the raw amino-acid sequence, 207 residues long: Glycerol-3-phosphate acyltransferase (207 aa).

5 consecutive transmembrane segments (helical) span residues 4-24 (VVAT…SFAV), 58-78 (ILTL…AQLL), 86-106 (DMGI…PVFH), 120-140 (ILLA…LIIA), and 162-182 (VLLF…VLLI).

The protein belongs to the PlsY family. Probably interacts with PlsX.

The protein localises to the cell inner membrane. The enzyme catalyses an acyl phosphate + sn-glycerol 3-phosphate = a 1-acyl-sn-glycero-3-phosphate + phosphate. It functions in the pathway lipid metabolism; phospholipid metabolism. Catalyzes the transfer of an acyl group from acyl-phosphate (acyl-PO(4)) to glycerol-3-phosphate (G3P) to form lysophosphatidic acid (LPA). This enzyme utilizes acyl-phosphate as fatty acyl donor, but not acyl-CoA or acyl-ACP. In Ralstonia nicotianae (strain ATCC BAA-1114 / GMI1000) (Ralstonia solanacearum), this protein is Glycerol-3-phosphate acyltransferase.